The following is a 526-amino-acid chain: ATP synthase subunit alpha (526 aa).

171-178 contacts ATP; that stretch reads GDRQTGKT.

It belongs to the ATPase alpha/beta chains family. As to quaternary structure, F-type ATPases have 2 components, CF(1) - the catalytic core - and CF(0) - the membrane proton channel. CF(1) has five subunits: alpha(3), beta(3), gamma(1), delta(1), epsilon(1). CF(0) has four main subunits: a, b, b' and c.

The protein resides in the cell inner membrane. It carries out the reaction ATP + H2O + 4 H(+)(in) = ADP + phosphate + 5 H(+)(out). In terms of biological role, produces ATP from ADP in the presence of a proton gradient across the membrane. The alpha chain is a regulatory subunit. The polypeptide is ATP synthase subunit alpha (Chlorobium phaeobacteroides (strain BS1)).